A 453-amino-acid polypeptide reads, in one-letter code: Ankyrin repeat and SOCS box protein 16 (453 aa).

7 ANK repeats span residues 56–85 (CRDP…AANM), 110–139 (KQTA…ELDA), 142–171 (GGRA…KANV), 175–204 (EGTT…TVNL), 209–238 (SQET…DVGL), 242–279 (QGET…DARA), and 283–312 (KRHT…RAEV). The 53-residue stretch at 398–450 (YSSALCMVNQPRQLQHLARLAVRARLGSRCRQGATRLPLPPLLRDYLLLRVEG) folds into the SOCS box domain.

It belongs to the ankyrin SOCS box (ASB) family.

The protein operates within protein modification; protein ubiquitination. Its function is as follows. May be a substrate-recognition component of a SCF-like ECS (Elongin-Cullin-SOCS-box protein) E3 ubiquitin-protein ligase complex which mediates the ubiquitination and subsequent proteasomal degradation of target proteins. This chain is Ankyrin repeat and SOCS box protein 16 (ASB16), found in Homo sapiens (Human).